The sequence spans 962 residues: MTKQTLTQLEQHDLFLRRHIGPDSSQQQEMLNYVGAESLDDLTAQIVPESIRLSQELSIGDSCGEAEGIAYIRGLAKQNQVFKSYIGMGYYGTQVPNVILRNVFENPGWYTAYTPYQPEIAQGRLEAILNFQQVSMDLTGLDLASASLLDEATAAAEAMALAKRVSKAKKANIFFVADDVFPQTLDVVKTRAECFGFEVVVGPAHEAVNHELFGALFQYSNRFGQITDFTDLFAELRAKNVIVTVAADIMALVLLKSPGAMGADVVFGSAQRFGVPMGFGGPHAAFFVARDEHKRSMPGRIIGVSKDTRGNRALRMAMQTREQHIRREKANSNICTAQILLANMASFYAVFHGPQGLKTIASRINRFTDILAAGLQAKGVSLVNNTWFDTISIKGLDVAAVNARALAAEMNLRFDADGIVGVSLDETTIRTDIEALFDVILGAGHGLDVAALDAQIVAQGSQSIPASLVRQDAILSHPTFNRYQSETEMMRYIKRLESKDLALNYSMISLGSCTMKLNAAVEMIPVSWPEFANMHPFCPLDQAKGYTQLIEELSSWLVNVTGYDAVCIQPNSGAQGEYAGLLAIRKYHESRGEAHRNICLIPQSAHGTNPASAQLAGMQVVVTACDKQGNVDLEDLKAKAAEVAENLSCIMITYPSTHGVYEESIREICNIVHQHGGQVYLDGANMNAQVGLTSPGFIGADVSHLNLHKTFAIPHGGGGPGMGPIGVKAHLAPFVAGHVVVKPGRESDNNGAVSAAPYGSAGILPISWMYIKLLGSNGLKKSTQTALLNANYVMKKLSEHYPVLFRGRNDRVAHECIIDLRPIKEASGVTEMDIAKRLNDYGFHAPTMSFPVAGTLMIEPTESESKVELDRFIDAMVSIRAEIAKVEAGEWPADNNPLHNAPHTMADIMDPAFDSRPYSREVAVFPSAAVRTNKFWPTVNRIDDVYGDRNLFCACVPLSDYE.

K709 carries the post-translational modification N6-(pyridoxal phosphate)lysine.

The protein belongs to the GcvP family. The glycine cleavage system is composed of four proteins: P, T, L and H. It depends on pyridoxal 5'-phosphate as a cofactor.

The enzyme catalyses N(6)-[(R)-lipoyl]-L-lysyl-[glycine-cleavage complex H protein] + glycine + H(+) = N(6)-[(R)-S(8)-aminomethyldihydrolipoyl]-L-lysyl-[glycine-cleavage complex H protein] + CO2. Functionally, the glycine cleavage system catalyzes the degradation of glycine. The P protein binds the alpha-amino group of glycine through its pyridoxal phosphate cofactor; CO(2) is released and the remaining methylamine moiety is then transferred to the lipoamide cofactor of the H protein. This Shewanella sp. (strain ANA-3) protein is Glycine dehydrogenase (decarboxylating).